Here is a 105-residue protein sequence, read N- to C-terminus: Large ribosomal subunit protein uL24 (105 aa).

The protein belongs to the universal ribosomal protein uL24 family. As to quaternary structure, part of the 50S ribosomal subunit.

Its function is as follows. One of two assembly initiator proteins, it binds directly to the 5'-end of the 23S rRNA, where it nucleates assembly of the 50S subunit. In terms of biological role, one of the proteins that surrounds the polypeptide exit tunnel on the outside of the subunit. This chain is Large ribosomal subunit protein uL24, found in Wolbachia sp. subsp. Brugia malayi (strain TRS).